The chain runs to 248 residues: ATP synthase subunit a, chloroplastic (248 aa).

Helical transmembrane passes span 35–55, 94–114, 133–153, 202–222, and 224–244; these read GQVF…SFLG, VPYI…GALI, INTT…AGLS, VFTL…GLFA, and SIQA…AMEG.

The protein belongs to the ATPase A chain family. As to quaternary structure, F-type ATPases have 2 components, CF(1) - the catalytic core - and CF(0) - the membrane proton channel. CF(1) has five subunits: alpha(3), beta(3), gamma(1), delta(1), epsilon(1). CF(0) has four main subunits: a, b, b' and c.

Its subcellular location is the plastid. It localises to the chloroplast thylakoid membrane. Key component of the proton channel; it plays a direct role in the translocation of protons across the membrane. The chain is ATP synthase subunit a, chloroplastic from Pyropia yezoensis (Susabi-nori).